Here is a 313-residue protein sequence, read N- to C-terminus: Olfactory receptor 8C8 (313 aa).

The Extracellular segment spans residues 1–27; that stretch reads MMQITMENKSSVSEFILMGLTDQPELQ. N8 is a glycosylation site (N-linked (GlcNAc...) asparagine). A helical transmembrane segment spans residues 28–48; sequence LPLFVLFLMNYTATVMGNLTL. Over 49-59 the chain is Cytoplasmic; that stretch reads MNLICLNSNLH. Residues 60 to 80 traverse the membrane as a helical segment; it reads TPMYFFLFNLSFIDFCYSMVF. Topologically, residues 81–96 are extracellular; that stretch reads TPKMLMSFILEKNTIS. The chain crosses the membrane as a helical span at residues 97–117; it reads FGGCMAQLFFFLFFVNSESYV. A disulfide bridge links C100 with C192. The Cytoplasmic portion of the chain corresponds to 118-136; sequence LTAMAYDRYVAICKPLTYK. The helical transmembrane segment at 137–157 threads the bilayer; the sequence is VIMSPKICCLLIFSSYLMGFA. At 158-208 the chain is on the extracellular side; the sequence is SAMAHTGCMIRLSFCDSNIINHYMCDIFPLLPLSCSSTYVNELMSSVVVGS. A helical membrane pass occupies residues 209–229; sequence AIILCCLIILISYAMILFNII. At 230-239 the chain is on the cytoplasmic side; sequence HMSSGKGWSK. The chain crosses the membrane as a helical span at residues 240–260; that stretch reads ALGTCGSHIITVSLFYGSGLL. The Extracellular portion of the chain corresponds to 261–274; it reads AYVKPSSAKTVGQG. The helical transmembrane segment at 275-295 threads the bilayer; that stretch reads KFFSVFYTLLVPMLNPLIYSL. At 296-313 the chain is on the cytoplasmic side; sequence RNKDVKLAVKKTWKRITS.

It belongs to the G-protein coupled receptor 1 family. As to expression, expressed in neurons in the olfactory epithelium.

It localises to the cell membrane. In terms of biological role, potential odorant receptor. This Mus musculus (Mouse) protein is Olfactory receptor 8C8.